We begin with the raw amino-acid sequence, 695 residues long: DNA topoisomerase 4 subunit B (695 aa).

The disordered stretch occupies residues 1–53; it reads MSSSDKIPSLFGDDDALAPVPAAPFKASVEPRVEPTPRPIPPPPPSKTASAPG. The segment covering 36–46 has biased composition (pro residues); the sequence is TPRPIPPPPPS. Residues Tyr55, Asn95, Asp122, 164–170, and Lys397 contribute to the ATP site; that span reads GLHGVGA. In terms of domain architecture, Toprim spans 477–591; sequence AELFIVEGDS…GGHLFLALPP (115 aa). Residues Glu483, Asp556, and Asp558 each coordinate Mg(2+).

This sequence belongs to the type II topoisomerase family. ParE type 1 subfamily. In terms of assembly, heterotetramer composed of ParC and ParE. Mg(2+) serves as cofactor. Mn(2+) is required as a cofactor. The cofactor is Ca(2+).

The enzyme catalyses ATP-dependent breakage, passage and rejoining of double-stranded DNA.. Functionally, topoisomerase IV is essential for chromosome segregation. It relaxes supercoiled DNA. Performs the decatenation events required during the replication of a circular DNA molecule. In Caulobacter vibrioides (strain ATCC 19089 / CIP 103742 / CB 15) (Caulobacter crescentus), this protein is DNA topoisomerase 4 subunit B.